The sequence spans 237 residues: Speedy protein E4 (237 aa).

The segment at 1 to 61 (MASGQARPPF…KRKSEWSDES (61 aa)) is disordered.

This sequence belongs to the Speedy/Ringo family. In terms of tissue distribution, predominantly expressed in testis.

This is Speedy protein E4 from Homo sapiens (Human).